The chain runs to 237 residues: MRPSGRKLDQMRSVSIEPNVMKHAEGSCLIRMGETHVLCSASIEDKPPPFLKNTGLGWVTAEYGMLPRATTSRNRREAAAGKQSGRTQEIQRLIGRALRAGVDRSALGERQIVIDCDVLQADGGTRCASITGGWVALRLAVNKLLKAGIIVSDPIVDNVAAVSCGIYAGQPVLDLDYAEDSTAGTDGNFVLTGRSRMIEVQMSAEGASFSRDEMGQLLDLAEAGIAELVAAQKAALG.

Residues arginine 86 and 124–126 each bind phosphate; that span reads GTR.

This sequence belongs to the RNase PH family. As to quaternary structure, homohexameric ring arranged as a trimer of dimers.

It carries out the reaction tRNA(n+1) + phosphate = tRNA(n) + a ribonucleoside 5'-diphosphate. Its function is as follows. Phosphorolytic 3'-5' exoribonuclease that plays an important role in tRNA 3'-end maturation. Removes nucleotide residues following the 3'-CCA terminus of tRNAs; can also add nucleotides to the ends of RNA molecules by using nucleoside diphosphates as substrates, but this may not be physiologically important. Probably plays a role in initiation of 16S rRNA degradation (leading to ribosome degradation) during starvation. The polypeptide is Ribonuclease PH (Cereibacter sphaeroides (strain KD131 / KCTC 12085) (Rhodobacter sphaeroides)).